The primary structure comprises 402 residues: tRNA(Met) cytidine acetate ligase (402 aa).

ATP is bound by residues 7–20, glycine 102, asparagine 171, and arginine 196; that span reads IAEY…HIHH.

It belongs to the TmcAL family.

The protein localises to the cytoplasm. It carries out the reaction cytidine(34) in elongator tRNA(Met) + acetate + ATP = N(4)-acetylcytidine(34) in elongator tRNA(Met) + AMP + diphosphate. Its function is as follows. Catalyzes the formation of N(4)-acetylcytidine (ac(4)C) at the wobble position of elongator tRNA(Met), using acetate and ATP as substrates. First activates an acetate ion to form acetyladenylate (Ac-AMP) and then transfers the acetyl group to tRNA to form ac(4)C34. The polypeptide is tRNA(Met) cytidine acetate ligase (Clostridium acetobutylicum (strain ATCC 824 / DSM 792 / JCM 1419 / IAM 19013 / LMG 5710 / NBRC 13948 / NRRL B-527 / VKM B-1787 / 2291 / W)).